Reading from the N-terminus, the 1141-residue chain is IgM protease (1141 aa).

Positions 1–32 are cleaved as a signal peptide; sequence MNIQERFSLRKSAVGLVSVSLLCAIYTSTVAA. Catalysis depends on Cys-195, which acts as the Nucleophile. Disordered stretches follow at residues 518 to 544, 725 to 749, 781 to 805, and 839 to 860; these read PDLP…STNL, EKDS…NVET, LEKD…TNVE, and EKDS…ESTS. Residues 526–544 are compositionally biased toward polar residues; sequence STVSDVDSLSSQETSSTNL. Low complexity-rich tracts occupy residues 738 to 749 and 795 to 805; these read EPTSSESTNVET and EPTSSESTNVE. A helical transmembrane segment spans residues 1119 to 1136; sequence IMGVGLLTLVLGSALGLL.

Belongs to the peptidase C66 family.

The protein resides in the cell membrane. Its subcellular location is the secreted. IgM cleavage is inhibited by iodoacetamide but not by AEBSF, bestatin, E-64, Z-LVG-CHN(2), or EDTA. In terms of biological role, catalyzes the specific cleavage of porcine IgM bound to the bacterial surface. Can degrade only IgM but neither IgG nor IgA, and is host specific, as it exclusively cleaves porcine IgM but not IgM from six other species, including human, mouse and a closely related member of the Suidae family. Promotes survival in porcine blood. Is thus involved in a so-far-unknown mechanism of host-pathogen interaction at an early stage of the host immune response. This Streptococcus suis (strain P1/7) protein is IgM protease (ide).